The chain runs to 332 residues: L-lactate dehydrogenase A chain (332 aa).

NAD(+)-binding positions include 29 to 57 and Arg-99; that span reads GAVGMACAISILMKDLADELALVDVVEDK. Substrate is bound by residues Arg-106, Asn-138, and Arg-169. Asn-138 is a binding site for NAD(+). The Proton acceptor role is filled by His-193. Position 248 (Thr-248) interacts with substrate.

The protein belongs to the LDH/MDH superfamily. LDH family. Homotetramer.

It localises to the cytoplasm. The catalysed reaction is (S)-lactate + NAD(+) = pyruvate + NADH + H(+). Its pathway is fermentation; pyruvate fermentation to lactate; (S)-lactate from pyruvate: step 1/1. Interconverts simultaneously and stereospecifically pyruvate and lactate with concomitant interconversion of NADH and NAD(+). This chain is L-lactate dehydrogenase A chain (LDHA), found in Alligator mississippiensis (American alligator).